Reading from the N-terminus, the 685-residue chain is ATP-dependent zinc metalloprotease FTSH 8, chloroplastic (685 aa).

A chloroplast-targeting transit peptide spans 1 to 37 (MAASSACLLGNGLSVYTTKQRFQKLGLDRTSKVTVVK). A thylakoid-targeting transit peptide spans 38–73 (ASLDEKKHEGRRGFFKLLLGNAAAGVGLLASGNANA). Topologically, residues 38–161 (ASLDEKKHEG…HNAQEDQGSP (124 aa)) are lumenal, thylakoid. Residues 162-182 (ILNLIGNLAFPVILIGGLFLL) traverse the membrane as a helical segment. Residues 183–685 (SRRSSGGMGG…STSTPTPASV (503 aa)) are Stromal-facing. Residue 260–267 (GPPGTGKT) participates in ATP binding. Residue His481 participates in Zn(2+) binding. Residue Glu482 is part of the active site. The Zn(2+) site is built by His485 and Asp559.

In the N-terminal section; belongs to the AAA ATPase family. This sequence in the C-terminal section; belongs to the peptidase M41 family. As to quaternary structure, heterohexamers with FTSH1, FTSH2 and FTSH5. May also form homooligomers. Requires Zn(2+) as cofactor. Expressed in cotyledons, cauline and rosette leaves, stems, sepals, flovers and siliques. Very low in roots.

The protein resides in the plastid. It is found in the chloroplast thylakoid membrane. Its function is as follows. Part of a complex that function as an ATP-dependent zinc metallopeptidase. Involved in the thylakoid formation and in the removal of damaged D1 in the photosystem II, preventing cell death under high-intensity light conditions. This Arabidopsis thaliana (Mouse-ear cress) protein is ATP-dependent zinc metalloprotease FTSH 8, chloroplastic (FTSH8).